We begin with the raw amino-acid sequence, 270 residues long: Hydroxyethylthiazole kinase (270 aa).

Met47 provides a ligand contact to substrate. 2 residues coordinate ATP: Arg123 and Thr169. Gly196 provides a ligand contact to substrate.

Belongs to the Thz kinase family. Mg(2+) is required as a cofactor.

The catalysed reaction is 5-(2-hydroxyethyl)-4-methylthiazole + ATP = 4-methyl-5-(2-phosphooxyethyl)-thiazole + ADP + H(+). The protein operates within cofactor biosynthesis; thiamine diphosphate biosynthesis; 4-methyl-5-(2-phosphoethyl)-thiazole from 5-(2-hydroxyethyl)-4-methylthiazole: step 1/1. Catalyzes the phosphorylation of the hydroxyl group of 4-methyl-5-beta-hydroxyethylthiazole (THZ). This Roseiflexus sp. (strain RS-1) protein is Hydroxyethylthiazole kinase.